A 681-amino-acid polypeptide reads, in one-letter code: DNA-directed RNA polymerase subunit beta' (681 aa).

Positions 69, 71, 87, and 90 each coordinate Zn(2+). Mg(2+)-binding residues include Asp490, Asp492, and Asp494.

This sequence belongs to the RNA polymerase beta' chain family. RpoC1 subfamily. As to quaternary structure, in plastids the minimal PEP RNA polymerase catalytic core is composed of four subunits: alpha, beta, beta', and beta''. When a (nuclear-encoded) sigma factor is associated with the core the holoenzyme is formed, which can initiate transcription. The cofactor is Mg(2+). Zn(2+) serves as cofactor.

It localises to the plastid. It is found in the chloroplast. The catalysed reaction is RNA(n) + a ribonucleoside 5'-triphosphate = RNA(n+1) + diphosphate. In terms of biological role, DNA-dependent RNA polymerase catalyzes the transcription of DNA into RNA using the four ribonucleoside triphosphates as substrates. The sequence is that of DNA-directed RNA polymerase subunit beta' from Liriodendron tulipifera (Tuliptree).